Reading from the N-terminus, the 472-residue chain is H(+)/Cl(-) exchange transporter ClcA (472 aa).

Residues Met1–Pro32 are Cytoplasmic-facing. The helical transmembrane segment at Leu33 to Ala69 threads the bilayer. Topologically, residues Gln70–Tyr76 are periplasmic. The chain crosses the membrane as a helical span at residues Leu77–Phe100. A Selectivity filter part_1 motif is present at residues Gly106–Pro110. Ser107 contributes to the chloride binding site. The helical intramembrane region spans Ile109–Leu116. The Cytoplasmic portion of the chain corresponds to Glu117–Arg123. 2 consecutive transmembrane segments (helical) span residues Trp124 to Ala141 and Glu148 to Phe166. The short motif at Gly146 to Pro150 is the Selectivity filter part_2 element. The Cytoplasmic portion of the chain corresponds to Arg167–Thr176. Intramembrane regions (helical) lie at residues Leu177 to Ala189 and Pro193 to Ile201. The Cytoplasmic portion of the chain corresponds to Glu202–Ser214. Residues Ile215 to Phe232 traverse the membrane as a helical segment. Residues Asn233 to Leu252 are Periplasmic-facing. The helical transmembrane segment at Trp253 to Gln281 threads the bilayer. Topologically, residues Arg282–Asn287 are cytoplasmic. A helical transmembrane segment spans residues Ile288–Gln309. The Periplasmic segment spans residues Pro310–Ser329. 2 consecutive transmembrane segments (helical) span residues Val330–Ser349 and Gly355–Ile376. The Selectivity filter part_3 motif lies at Gly355–Pro359. The chloride site is built by Ile356 and Phe357. Topologically, residues Pro377–Ala386 are periplasmic. An intramembrane region (helical) is located at residues Gly387 to Ser401. The segment at residues Val402–Ala404 is an intramembrane region (note=Loop between two helices). Residues Pro405–Thr416 constitute an intramembrane region (helical). Residues Asp417–Leu421 constitute an intramembrane region (note=Loop between two helices). A helical transmembrane segment spans residues Ile422 to Phe438. Residues Leu439 to Thr472 are Cytoplasmic-facing. Residue Tyr445 coordinates chloride.

The protein belongs to the chloride channel (TC 2.A.49) family. ClcA subfamily. Homodimer.

The protein resides in the cell inner membrane. The enzyme catalyses 2 chloride(in) + H(+)(out) = 2 chloride(out) + H(+)(in). Proton-coupled chloride transporter. Functions as antiport system and exchanges two chloride ions for 1 proton. Probably acts as an electrical shunt for an outwardly-directed proton pump that is linked to amino acid decarboxylation, as part of the extreme acid resistance (XAR) response. The protein is H(+)/Cl(-) exchange transporter ClcA of Klebsiella pneumoniae subsp. pneumoniae (strain ATCC 700721 / MGH 78578).